A 324-amino-acid chain; its full sequence is D-alanine--D-alanine ligase (324 aa).

Residues 116 to 311 enclose the ATP-grasp domain; that stretch reads KQVWHTLGIP…FQQLVLAILA (196 aa). ATP is bound at residue 142–197; it reads ATELGFPLIVKPAHEGSSIGMAKVSSASELIDAWKAASTYDSQVLVEQWIHGPEFT. Asp-265, Glu-278, and Asn-280 together coordinate Mg(2+).

It belongs to the D-alanine--D-alanine ligase family. Requires Mg(2+) as cofactor. The cofactor is Mn(2+).

Its subcellular location is the cytoplasm. It catalyses the reaction 2 D-alanine + ATP = D-alanyl-D-alanine + ADP + phosphate + H(+). It functions in the pathway cell wall biogenesis; peptidoglycan biosynthesis. Cell wall formation. The protein is D-alanine--D-alanine ligase of Pseudomonas fluorescens (strain Pf0-1).